We begin with the raw amino-acid sequence, 182 residues long: Probable peptidyl-prolyl cis-trans isomerase A (182 aa).

The region spanning 13–181 is the PPIase cyclophilin-type domain; that stretch reads ATATATLHTN…DPVVIESITI (169 aa).

Belongs to the cyclophilin-type PPIase family.

The protein localises to the cytoplasm. It catalyses the reaction [protein]-peptidylproline (omega=180) = [protein]-peptidylproline (omega=0). In terms of biological role, PPIases accelerate the folding of proteins. It catalyzes the cis-trans isomerization of proline imidic peptide bonds in oligopeptides. The protein is Probable peptidyl-prolyl cis-trans isomerase A (ppiA) of Mycobacterium bovis (strain ATCC BAA-935 / AF2122/97).